The following is a 365-amino-acid chain: Peptide chain release factor 2 (365 aa).

Gln-251 is modified (N5-methylglutamine).

The protein belongs to the prokaryotic/mitochondrial release factor family. Post-translationally, methylated by PrmC. Methylation increases the termination efficiency of RF2.

The protein resides in the cytoplasm. Its function is as follows. Peptide chain release factor 2 directs the termination of translation in response to the peptide chain termination codons UGA and UAA. The chain is Peptide chain release factor 2 from Campylobacter jejuni subsp. jejuni serotype O:6 (strain 81116 / NCTC 11828).